The primary structure comprises 73 residues: Putative membrane protein insertion efficiency factor (73 aa).

This sequence belongs to the UPF0161 family.

The protein resides in the cell inner membrane. Functionally, could be involved in insertion of integral membrane proteins into the membrane. This is Putative membrane protein insertion efficiency factor from Phocaeicola vulgatus (strain ATCC 8482 / DSM 1447 / JCM 5826 / CCUG 4940 / NBRC 14291 / NCTC 11154) (Bacteroides vulgatus).